Here is a 90-residue protein sequence, read N- to C-terminus: Probable Fe(2+)-trafficking protein (90 aa).

Belongs to the Fe(2+)-trafficking protein family.

In terms of biological role, could be a mediator in iron transactions between iron acquisition and iron-requiring processes, such as synthesis and/or repair of Fe-S clusters in biosynthetic enzymes. The polypeptide is Probable Fe(2+)-trafficking protein (Pseudomonas syringae pv. tomato (strain ATCC BAA-871 / DC3000)).